The primary structure comprises 3926 residues: Hybrid PKS-NRPS synthetase LUC5 (3926 aa).

The region spanning 8–439 (REPIAIVGTA…GTNAHAIIES (432 aa)) is the Ketosynthase family 3 (KS3) domain. Residues C181, H318, and H359 each act as for beta-ketoacyl synthase activity in the active site. The malonyl-CoA:ACP transacylase (MAT) domain stretch occupies residues 545–863 (VFTGQGAQWP…QGALTRNVHD (319 aa)). Residues 932–1065 (HPLLGTRSTE…GHLRVDFGSE (134 aa)) are N-terminal hotdog fold. A dehydratase (DH) domain region spans residues 932 to 1225 (HPLLGTRSTE…GLTCTSLLRP (294 aa)). The 297-residue stretch at 932–1228 (HPLLGTRSTE…CTSLLRPGPS (297 aa)) folds into the PKS/mFAS DH domain. H964 functions as the Proton acceptor; for dehydratase activity in the catalytic mechanism. The C-terminal hotdog fold stretch occupies residues 1081–1228 (LTSVNIERFY…CTSLLRPGPS (148 aa)). Catalysis depends on D1138, which acts as the Proton donor; for dehydratase activity. The C-methyltransferase (CMeT) domain stretch occupies residues 1344-1572 (IRAVGENLTE…VNDFYDPSKY (229 aa)). The interval 2091 to 2265 (TYLLAGCTGG…AASVIHIGMI (175 aa)) is ketoreductase (KR) domain 1. The Carrier 1 domain occupies 2371–2448 (EMLEVVEEEF…EICSTAVASL (78 aa)). O-(pantetheine 4'-phosphoryl)serine is present on S2408. Over residues 2474–2506 (VSGNGSSSSRAPTEFNSSTLKSGAQSTQGTSVS) the composition is skewed to polar residues. The segment at 2474–2518 (VSGNGSSSSRAPTEFNSSTLKSGAQSTQGTSVSGDKDTNSVDGSA) is disordered. Over residues 2507-2518 (GDKDTNSVDGSA) the composition is skewed to basic and acidic residues. Residues 2525 to 2810 (PLSFAQERIW…VNLLPLRFQL (286 aa)) form a condensation region. The interval 2979 to 3389 (DWVKRQPDAI…RIAGDSQIKL (411 aa)) is adenylation. A Carrier 2 domain is found at 3501 to 3580 (ETLTTTQERL…GMAAKIDGST (80 aa)). S3540 carries the post-translational modification O-(pantetheine 4'-phosphoryl)serine. The tract at residues 3619–3840 (LTGATGFLGL…DFVPVEQVAD (222 aa)) is thiolester reductase (TE) domain.

In the C-terminal section; belongs to the NRP synthetase family.

It functions in the pathway mycotoxin biosynthesis. Its function is as follows. Hybrid PKS-NRPS synthetase; part of the gene cluster that mediates the biosynthesis of the mycotoxin lucilactaene and the lucilactaene-related compound NG-391 that act as cell cycle inhibitors with potent growth inhibitory activity against malarial parasites, moderate growth inhibitory activity against cancer cells, and no activity against bacteria and fungi. The hybrid PKS-NRPS synthetase LUC5 is responsible for the condensation of one acetyl-coenzyme A (CoA) unit with six malonyl-CoA units and the amide linkage of the arising heptaketide and homoserine, subsequently releasing the first intermediate prelucilactaene B, as an alcohol with an open ring structure. Lucilactaene and NG-391 lack the 7-methyl group present in fusarins which is inserted in fusarins by the C-methyltransferase (CMeT) domain of the fusarin synthetase FUS1, suggesting that the CMet domain of LUC5 does not methylate this position. Within the pathway, both the cytochrome P450 monooxygenase LUC2 and the hydrolase LUC6 function in parallel in modification of prelucilactaene B. LUC6 may catalyze the 2-pyrrolidone ring formation to form prelucilactaene C from prelucilactaene B, followed by C-15 hydroxylation by the same enzyme to give prelucilactaene D, which is then converted to prelucilactaene E by epoxidation, and finally to prelucilactaene F by cyclization. Prelucilactane D, prelucilactaene E, and prelucilactaene F can be converted to dihydrolucilactaene, NG391, and lucilactaene, respectively, via C-20 methyl group hydroxylation by the cytochrome P450 monooxygenase LUC2. However, LUC2, unlike FUS8 in fusarin C biosynthesis, is not enough for the full oxidation of the C-20 methyl group into carboxylic acid, which is a prerequisite for the final methylation step. The aldehyde dehydrogenase LUC3 is involved in the biosynthesis by further oxidation of the C-20 alcoholic analog prelucilactaene G into a carboxylic derivative. This unidentified carboxylic derivative may be converted to demethyllucilactaene. As the last step, the methyltransferase LUC1 methylates the hydroxyl group at C-21 of demethyllucilactaene to generate lucilactaene. This Fusarium sp protein is Hybrid PKS-NRPS synthetase LUC5.